The chain runs to 245 residues: Small ribosomal subunit protein uS2 (245 aa).

It belongs to the universal ribosomal protein uS2 family.

This chain is Small ribosomal subunit protein uS2, found in Pseudomonas fluorescens (strain ATCC BAA-477 / NRRL B-23932 / Pf-5).